The sequence spans 348 residues: GTP 3',8-cyclase (348 aa).

The region spanning P24–P248 is the Radical SAM core domain. GTP is bound at residue R33. The [4Fe-4S] cluster site is built by C40 and C44. Y46 lines the S-adenosyl-L-methionine pocket. Residue C47 coordinates [4Fe-4S] cluster. R82 is a GTP binding site. Residue G86 participates in S-adenosyl-L-methionine binding. T115 lines the GTP pocket. Residue S139 coordinates S-adenosyl-L-methionine. Residue K175 coordinates GTP. M209 serves as a coordination point for S-adenosyl-L-methionine. Residues C272 and C275 each coordinate [4Fe-4S] cluster. R277–R279 contacts GTP. C289 is a binding site for [4Fe-4S] cluster.

Belongs to the radical SAM superfamily. MoaA family. As to quaternary structure, monomer and homodimer. [4Fe-4S] cluster is required as a cofactor.

It catalyses the reaction GTP + AH2 + S-adenosyl-L-methionine = (8S)-3',8-cyclo-7,8-dihydroguanosine 5'-triphosphate + 5'-deoxyadenosine + L-methionine + A + H(+). The protein operates within cofactor biosynthesis; molybdopterin biosynthesis. In terms of biological role, catalyzes the cyclization of GTP to (8S)-3',8-cyclo-7,8-dihydroguanosine 5'-triphosphate. This is GTP 3',8-cyclase from Rhizobium etli (strain ATCC 51251 / DSM 11541 / JCM 21823 / NBRC 15573 / CFN 42).